Here is a 990-residue protein sequence, read N- to C-terminus: F-box/LRR-repeat protein 15 (990 aa).

The F-box domain occupies 190 to 236; that stretch reads FEVHIDLTDDLLHMVFSFLNHVDLCRSAMVCRQWRVASAHEDFWRVL. 22 LRR repeats span residues 237–258, 280–303, 317–341, 348–373, 397–423, 441–465, 466–477, 478–503, 519–542, 550–574, 589–612, 614–633, 640–652, 653–678, 734–756, 758–782, 785–809, 813–839, 882–893, 894–914, 915–937, and 949–973; these read NFENIRISMEQFENMCSRYPNA, LRNLEVLTIGKGHISESFFQALGE, LGNGAQEIHLSHDRLRELKITKCRV, CPQLRSLSLKRSNMSQAMLNCPLLQL, LESLDVSNCSCVSDETLREIAQACANL, LPMLTVLKLHSCEGITSASMTWIAN, SPALEVLELDNC, NLLTTVSLHLSRLQSISLVHCRKFTD, CPALRRITITSNALRRLALQKQEN, CHSLQEVDLSDCESLSNSVCKIFSD, CESLTAVRFCNSSLASLSLVGCRA, TSLELKCPRIEQICLDGCDH, QPVALRSLNLGIC, PKLSVLNIEAPYMVSLELKGCGVLSE, LPNLTVLDLSYTFLMNLEPVFKS, IQLKVLKLQACKYLTDSSLEPLYKE, LPALEELDLSYGTLCQTAIDDLLAC, LTHLSLNGCVNMHDLDWGSTSVHLFDY, FYHLSTLNLSLS, VNLKEVDLTCSNLVLLNLSNC, CSLEVLKLGCPRLASLFLQSCNM, and CSSLETLDLRFCPKISSVSMSKFRT.

This is F-box/LRR-repeat protein 15 (FBL15) from Arabidopsis thaliana (Mouse-ear cress).